A 288-amino-acid chain; its full sequence is MAPPAASGIPSIAPSLGPTAVWLGNRSDLGDVQALASRDLPTTTVTAGNNNKPEHLEYVAFVLVPVFFIMGLLGILICHVLKKKGYRCTTEAEEVEEEEKPDEKIEMNETAHENSDTVGQIINYIMKNEANADVLKAMVADSSVFEPESPMSPNAPGSPTSPGSPLSPGAASLKHNCKGHHLHTVGGVIEKDVCSRCSHKRWHHIKPAHKSKEHRRSRLGEVTVLSVGRFRVTKVEHKSNSKERKSLMSVTGVEGLNGDMPATPVKQEAKEAPATPVKEGTQERRSSE.

The signal sequence occupies residues 1–23 (MAPPAASGIPSIAPSLGPTAVWL). Residues 24–57 (GNRSDLGDVQALASRDLPTTTVTAGNNNKPEHLE) are Extracellular-facing. The N-linked (GlcNAc...) asparagine glycan is linked to N25. A helical membrane pass occupies residues 58-78 (YVAFVLVPVFFIMGLLGILIC). Residues 79 to 288 (HVLKKKGYRC…EGTQERRSSE (210 aa)) lie on the Cytoplasmic side of the membrane. 2 disordered regions span residues 145 to 172 (FEPESPMSPNAPGSPTSPGSPLSPGAAS) and 237 to 288 (HKSN…RSSE). Positions 152–172 (SPNAPGSPTSPGSPLSPGAAS) are enriched in low complexity. The span at 237-246 (HKSNSKERKS) shows a compositional bias: basic and acidic residues.

The protein belongs to the RELT family.

The protein resides in the cell membrane. The polypeptide is RELT-like protein 1 (RELL1) (Gallus gallus (Chicken)).